Reading from the N-terminus, the 96-residue chain is UPF0235 protein YggU (96 aa).

Belongs to the UPF0235 family.

This Salmonella agona (strain SL483) protein is UPF0235 protein YggU.